A 227-amino-acid chain; its full sequence is 7-cyano-7-deazaguanine synthase (227 aa).

Val-7–Thr-17 is an ATP binding site. Zn(2+) contacts are provided by Cys-187, Cys-195, Cys-198, and Cys-201.

It belongs to the QueC family. The cofactor is Zn(2+).

It catalyses the reaction 7-carboxy-7-deazaguanine + NH4(+) + ATP = 7-cyano-7-deazaguanine + ADP + phosphate + H2O + H(+). It functions in the pathway purine metabolism; 7-cyano-7-deazaguanine biosynthesis. Catalyzes the ATP-dependent conversion of 7-carboxy-7-deazaguanine (CDG) to 7-cyano-7-deazaguanine (preQ(0)). The protein is 7-cyano-7-deazaguanine synthase of Chlorobaculum tepidum (strain ATCC 49652 / DSM 12025 / NBRC 103806 / TLS) (Chlorobium tepidum).